A 319-amino-acid chain; its full sequence is Thioredoxin reductase (319 aa).

Residue 37 to 44 (ERGVPGGQ) coordinates FAD. Cysteines 136 and 139 form a disulfide. 279 to 288 (DVRAKSLRQI) serves as a coordination point for FAD.

It belongs to the class-II pyridine nucleotide-disulfide oxidoreductase family. In terms of assembly, homodimer. It depends on FAD as a cofactor.

It localises to the cytoplasm. It catalyses the reaction [thioredoxin]-dithiol + NADP(+) = [thioredoxin]-disulfide + NADPH + H(+). This chain is Thioredoxin reductase (trxB), found in Listeria monocytogenes serovar 1/2a (strain ATCC BAA-679 / EGD-e).